A 224-amino-acid polypeptide reads, in one-letter code: Deoxyribose-phosphate aldolase (224 aa).

D92 serves as the catalytic Proton donor/acceptor. K154 serves as the catalytic Schiff-base intermediate with acetaldehyde. K183 functions as the Proton donor/acceptor in the catalytic mechanism.

The protein belongs to the DeoC/FbaB aldolase family. DeoC type 1 subfamily.

The protein localises to the cytoplasm. The catalysed reaction is 2-deoxy-D-ribose 5-phosphate = D-glyceraldehyde 3-phosphate + acetaldehyde. It functions in the pathway carbohydrate degradation; 2-deoxy-D-ribose 1-phosphate degradation; D-glyceraldehyde 3-phosphate and acetaldehyde from 2-deoxy-alpha-D-ribose 1-phosphate: step 2/2. In terms of biological role, catalyzes a reversible aldol reaction between acetaldehyde and D-glyceraldehyde 3-phosphate to generate 2-deoxy-D-ribose 5-phosphate. The polypeptide is Deoxyribose-phosphate aldolase (Mannheimia succiniciproducens (strain KCTC 0769BP / MBEL55E)).